We begin with the raw amino-acid sequence, 240 residues long: Protein unc-119 homolog A (240 aa).

Over residues 1–11 (MKVKKGGGGAG) the composition is skewed to gly residues. Positions 1-59 (MKVKKGGGGAGTATESAPGPSGQSVAPIPQPPAESESGSESEPDAGPGPRPGPLQRKQP) are required for midbody localization. The interval 1-61 (MKVKKGGGGA…GPLQRKQPIG (61 aa)) is disordered. Residues S37, S39, and S41 each carry the phosphoserine; by CK2 modification. Residues 121-240 (LDPNAGRFVR…KADYSYSGTP (120 aa)) form a required for centrosome localization region. Residue Y131 coordinates tetradecanoate.

The protein belongs to the PDE6D/unc-119 family. Interacts with CABP4; in the absence of calcium. Interacts with DNM1; leading to a decrease of DNM1 GTPase activity. May interact with GTP-bound ARL1. Interacts with ARL2 and ARL3 (GTP-bound forms); this promotes the release of myyristoylated cargo proteins. Found in a complex with ARL3, RP2 and UNC119; RP2 induces hydrolysis of GTP ARL3 in the complex, leading to the release of UNC119. Interacts with NPHP3 (when myristoylated). Interacts with CYS1 (when myristoylated). Interacts with MACIR; interaction only takes place when UNC119 is not liganded with myristoylated proteins. Interacts with LCK; this interaction plays a crucial role in activation of LCK. Interacts with FYN. Interacts with RAB11A; in a cell cycle-dependent manner. Interacts with LYN (via SH2 and SH3 domains); leading to LYN activation. Found in a complex with ABL1, ABL2, CRK and UNC119; leading to the inhibition of CRK phosphorylation by ABL kinases. Interacts with CD44; leading to Shigella invasion. Interacts with KLHL18 (via kelch repeats). Interacts with PPP3CA, PPP3CB and PPP3CC. Interacts with USP48; this interaction promotes UNC119 stability. Post-translationally, phosphorylation suppresses its interaction with KLHL18 and down-regulates its KLHL18-mediated degradation. Phosphorylated more under light conditions than dark conditions. Dephosphorylated by calcineurin. In terms of tissue distribution, abundantly expressed in retina, in photoreceptor synapses and inner segments. Expressed in a much lesser extent in several other tissues.

Its subcellular location is the cytoplasm. The protein localises to the cytoskeleton. It localises to the microtubule organizing center. It is found in the centrosome. The protein resides in the spindle pole. Its subcellular location is the spindle. Involved in synaptic functions in photoreceptor cells, the signal transduction in immune cells as a Src family kinase activator, endosome recycling, the uptake of bacteria and endocytosis, protein trafficking in sensory neurons and as lipid-binding chaperone with specificity for a diverse subset of myristoylated proteins. Specifically binds the myristoyl moiety of a subset of N-terminally myristoylated proteins and is required for their localization. Binds myristoylated GNAT1 and is required for G-protein localization and trafficking in sensory neurons. Probably plays a role in trafficking proteins in photoreceptor cells. Plays important roles in mediating Src family kinase signals for the completion of cytokinesis via RAB11A. This Homo sapiens (Human) protein is Protein unc-119 homolog A (UNC119).